A 446-amino-acid chain; its full sequence is MTTQIRPFTTQSEALFARAQAVTPGGVNSPVRAFRSVGGTPRFIREAHGAYLTDMDGHRLLDYIGSWGPMILGHDHPAVREAVAAALDRGTSFGAPSEGEVRLAETVTRLTGVDRVRFVNSGTEATMSALRLARGFTGRTFIVKFRGNYHGHADGLLVEAGSGLMTNAAKTLGQAAPSSAGVPEEYARLTLVCEYNDPAALGALMQERGHDVAAVIFEPVVGNAGVLIPTPEFLAALHRVRDAGALLIADEVMTGFRLSLRGATGLLGLTPDLICWGKIIGGGLPVGAYGGRAEVMDFVSPQGPVYQAGTLSGNPLAMAAGLATLEVLESDPSIYARLETYTMQLAEGLRAAAQAAGVPLSVNQIGSMLTAFHQDAPVGSIRTYADAARSDTGAFAVWFQRMLAQGIYWAPSQFESIFVSAAHTDSDLNATLDAAHSAYAQLGGTA.

K278 is modified (N6-(pyridoxal phosphate)lysine).

The protein belongs to the class-III pyridoxal-phosphate-dependent aminotransferase family. HemL subfamily. As to quaternary structure, homodimer. The cofactor is pyridoxal 5'-phosphate.

The protein localises to the cytoplasm. It catalyses the reaction (S)-4-amino-5-oxopentanoate = 5-aminolevulinate. It participates in porphyrin-containing compound metabolism; protoporphyrin-IX biosynthesis; 5-aminolevulinate from L-glutamyl-tRNA(Glu): step 2/2. This Deinococcus geothermalis (strain DSM 11300 / CIP 105573 / AG-3a) protein is Glutamate-1-semialdehyde 2,1-aminomutase.